The sequence spans 279 residues: Coiled-coil domain-containing protein 106 (279 aa).

Residues Lys-62–Arg-101 adopt a coiled-coil conformation. Residues Arg-109–Ser-121 show a composition bias toward basic and acidic residues. The tract at residues Arg-109 to Gln-173 is disordered. Ser-129 is subject to Phosphoserine. Positions Lys-151–Phe-164 match the Bipartite nuclear localization signal motif. Positions Lys-151–Thr-167 are enriched in basic residues.

As to quaternary structure, interacts with p53/TP53.

It is found in the nucleus. Promotes the degradation of p53/TP53 protein and inhibits its transactivity. This Mus musculus (Mouse) protein is Coiled-coil domain-containing protein 106 (Ccdc106).